We begin with the raw amino-acid sequence, 215 residues long: Probable transaldolase 1 (215 aa).

The Schiff-base intermediate with substrate role is filled by K83.

Belongs to the transaldolase family. Type 3B subfamily.

It localises to the cytoplasm. The catalysed reaction is D-sedoheptulose 7-phosphate + D-glyceraldehyde 3-phosphate = D-erythrose 4-phosphate + beta-D-fructose 6-phosphate. It functions in the pathway carbohydrate degradation; pentose phosphate pathway; D-glyceraldehyde 3-phosphate and beta-D-fructose 6-phosphate from D-ribose 5-phosphate and D-xylulose 5-phosphate (non-oxidative stage): step 2/3. Its function is as follows. Transaldolase is important for the balance of metabolites in the pentose-phosphate pathway. In Bacillus anthracis, this protein is Probable transaldolase 1.